A 194-amino-acid chain; its full sequence is Segregation and condensation protein B (194 aa).

It belongs to the ScpB family. As to quaternary structure, homodimer. Homodimerization may be required to stabilize the binding of ScpA to the Smc head domains. Component of a cohesin-like complex composed of ScpA, ScpB and the Smc homodimer, in which ScpA and ScpB bind to the head domain of Smc. The presence of the three proteins is required for the association of the complex with DNA.

The protein localises to the cytoplasm. Its function is as follows. Participates in chromosomal partition during cell division. May act via the formation of a condensin-like complex containing Smc and ScpA that pull DNA away from mid-cell into both cell halves. The sequence is that of Segregation and condensation protein B from Streptococcus agalactiae serotype Ia (strain ATCC 27591 / A909 / CDC SS700).